Reading from the N-terminus, the 92-residue chain is Small ribosomal subunit protein uS19c (92 aa).

Belongs to the universal ribosomal protein uS19 family.

It localises to the plastid. The protein localises to the chloroplast. In terms of biological role, protein S19 forms a complex with S13 that binds strongly to the 16S ribosomal RNA. This is Small ribosomal subunit protein uS19c (rps19) from Pinus thunbergii (Japanese black pine).